The sequence spans 224 residues: Probable proteasome subunit beta type-4 (224 aa).

Belongs to the peptidase T1B family. As to quaternary structure, the 26S proteasome consists of a 20S proteasome core and two 19S regulatory subunits. The 20S proteasome core is composed of 28 subunits that are arranged in four stacked rings, resulting in a barrel-shaped structure. The two end rings are each formed by seven alpha subunits, and the two central rings are each formed by seven beta subunits. The catalytic chamber with the active sites is on the inside of the barrel.

It is found in the cytoplasm. The protein resides in the nucleus. Its function is as follows. Non-catalytic component of the proteasome, a multicatalytic proteinase complex which is characterized by its ability to cleave peptides with Arg, Phe, Tyr, Leu, and Glu adjacent to the leaving group at neutral or slightly basic pH. The proteasome has an ATP-dependent proteolytic activity. The protein is Probable proteasome subunit beta type-4 (CPR1) of Cryptococcus neoformans var. neoformans serotype D (strain B-3501A) (Filobasidiella neoformans).